A 379-amino-acid chain; its full sequence is Inositol 3-kinase (379 aa).

ATP contacts are provided by residues S217, 267 to 270 (GAGD), and N294. Residue D270 is the Proton acceptor of the active site.

Belongs to the carbohydrate kinase pfkB family.

The enzyme catalyses myo-inositol + ATP = 1D-myo-inositol 3-phosphate + ADP + H(+). Its function is as follows. Kinase that phosphorylates myo-inositol to produce multiple myo-inositol monophosphates, Ins(1)P, Ins(3)P, Ins(4)P, Ins(5)P and Ins(6)P. Participates in phytic acid biosynthesis in developing seeds. Phytic acid is the primary storage form of phosphorus in cereal grains and other plant seeds. The sequence is that of Inositol 3-kinase from Zea mays (Maize).